A 417-amino-acid chain; its full sequence is Serine hydroxymethyltransferase (417 aa).

(6S)-5,6,7,8-tetrahydrofolate is bound by residues leucine 121 and 125–127 (GHL). Lysine 229 carries the N6-(pyridoxal phosphate)lysine modification. 355–357 (SPF) contacts (6S)-5,6,7,8-tetrahydrofolate.

It belongs to the SHMT family. In terms of assembly, homodimer. It depends on pyridoxal 5'-phosphate as a cofactor.

The protein localises to the cytoplasm. It catalyses the reaction (6R)-5,10-methylene-5,6,7,8-tetrahydrofolate + glycine + H2O = (6S)-5,6,7,8-tetrahydrofolate + L-serine. The protein operates within one-carbon metabolism; tetrahydrofolate interconversion. It participates in amino-acid biosynthesis; glycine biosynthesis; glycine from L-serine: step 1/1. Catalyzes the reversible interconversion of serine and glycine with tetrahydrofolate (THF) serving as the one-carbon carrier. This reaction serves as the major source of one-carbon groups required for the biosynthesis of purines, thymidylate, methionine, and other important biomolecules. Also exhibits THF-independent aldolase activity toward beta-hydroxyamino acids, producing glycine and aldehydes, via a retro-aldol mechanism. This Citrobacter koseri (strain ATCC BAA-895 / CDC 4225-83 / SGSC4696) protein is Serine hydroxymethyltransferase.